The primary structure comprises 174 residues: ATP-dependent protease subunit HslV (174 aa).

T2 is a catalytic residue. Positions 156, 159, and 162 each coordinate Na(+).

It belongs to the peptidase T1B family. HslV subfamily. In terms of assembly, a double ring-shaped homohexamer of HslV is capped on each side by a ring-shaped HslU homohexamer. The assembly of the HslU/HslV complex is dependent on binding of ATP.

It localises to the cytoplasm. The catalysed reaction is ATP-dependent cleavage of peptide bonds with broad specificity.. With respect to regulation, allosterically activated by HslU binding. In terms of biological role, protease subunit of a proteasome-like degradation complex believed to be a general protein degrading machinery. This Agrobacterium fabrum (strain C58 / ATCC 33970) (Agrobacterium tumefaciens (strain C58)) protein is ATP-dependent protease subunit HslV.